We begin with the raw amino-acid sequence, 231 residues long: Small ribosomal subunit protein uS3 (231 aa).

The region spanning 39 to 108 is the KH type-2 domain; sequence IKNYIKKRYK…EISISVLEVK (70 aa).

It belongs to the universal ribosomal protein uS3 family. In terms of assembly, part of the 30S ribosomal subunit. Forms a tight complex with proteins S10 and S14.

Its function is as follows. Binds the lower part of the 30S subunit head. Binds mRNA in the 70S ribosome, positioning it for translation. This chain is Small ribosomal subunit protein uS3, found in Aquifex pyrophilus.